The following is a 208-amino-acid chain: MSVRFQSDDEYMRNLITTSGISIGTQVKTKFMKQFISDTDPTGTYTLDLEATQGRIKAAAQFIEHTGASELIVCSGKDSARVPIRKFAELVGCKDIHKRFMPGTLTNPDLPKYMEPKLLLVCDPQVDAQAVTEATNAGIPVIGIANSDNVTSRLDVIIPANNRGRGALAAIFWLLAREVLVIRGEVDETKPMKYEIDDFETKDVREDE.

It belongs to the universal ribosomal protein uS2 family.

This is Small ribosomal subunit protein uS2 from Cenarchaeum symbiosum (strain A).